A 405-amino-acid chain; its full sequence is L-carnitine CoA-transferase (405 aa).

CoA is bound by residues lysine 97 and arginine 104. Aspartate 169 (nucleophile) is an active-site residue.

This sequence belongs to the CoA-transferase III family. CaiB subfamily. As to quaternary structure, homodimer.

It is found in the cytoplasm. It catalyses the reaction crotonobetainyl-CoA + (R)-carnitine = crotonobetaine + (R)-carnitinyl-CoA. It carries out the reaction 4-(trimethylamino)butanoyl-CoA + (R)-carnitine = (R)-carnitinyl-CoA + 4-(trimethylamino)butanoate. It participates in amine and polyamine metabolism; carnitine metabolism. In terms of biological role, catalyzes the reversible transfer of the CoA moiety from gamma-butyrobetainyl-CoA to L-carnitine to generate L-carnitinyl-CoA and gamma-butyrobetaine. Is also able to catalyze the reversible transfer of the CoA moiety from gamma-butyrobetainyl-CoA or L-carnitinyl-CoA to crotonobetaine to generate crotonobetainyl-CoA. In Escherichia coli O7:K1 (strain IAI39 / ExPEC), this protein is L-carnitine CoA-transferase.